The following is a 132-amino-acid chain: Large ribosomal subunit protein uL14 (132 aa).

Belongs to the universal ribosomal protein uL14 family. Part of the 50S ribosomal subunit. Forms a cluster with proteins L3 and L24e, part of which may contact the 16S rRNA in 2 intersubunit bridges.

Its function is as follows. Binds to 23S rRNA. Forms part of two intersubunit bridges in the 70S ribosome. This chain is Large ribosomal subunit protein uL14, found in Methanococcus maripaludis (strain DSM 14266 / JCM 13030 / NBRC 101832 / S2 / LL).